The primary structure comprises 104 residues: Replication restart protein PriB (104 aa).

Positions 1-101 (MTNRLTLSGT…LHAEQIELID (101 aa)) constitute an SSB domain.

It belongs to the PriB family. As to quaternary structure, homodimer. Interacts with PriA and DnaT. Component of the replication restart primosome. Primosome assembly occurs via a 'hand-off' mechanism. PriA binds to replication forks, subsequently PriB then DnaT bind; DnaT then displaces ssDNA to generate the helicase loading substrate.

Involved in the restart of stalled replication forks, which reloads the replicative helicase on sites other than the origin of replication; the PriA-PriB pathway is the major replication restart pathway. During primosome assembly it facilitates complex formation between PriA and DnaT on DNA; stabilizes PriA on DNA. Stimulates the DNA unwinding activity of PriA helicase. This is Replication restart protein PriB from Salmonella typhi.